We begin with the raw amino-acid sequence, 330 residues long: Ribose operon repressor (330 aa).

Residues alanine 2 to leucine 56 form the HTH lacI-type domain. Positions methionine 4 to asparagine 23 form a DNA-binding region, H-T-H motif.

Its function is as follows. Transcriptional repressor for the ribose rbsDACBK operon. RbsR binds to a region of perfect dyad symmetry spanning the rbs operon transcriptional start site. The affinity for the rbs operator is reduced by addition of ribose, consistent with ribose being the inducer of the operon. This chain is Ribose operon repressor (rbsR), found in Escherichia coli O6:H1 (strain CFT073 / ATCC 700928 / UPEC).